A 314-amino-acid polypeptide reads, in one-letter code: Olfactory receptor 10T2 (314 aa).

Residues 1–26 (MRGFNKTTVVTQFILVGFSSLGELQL) lie on the Extracellular side of the membrane. N-linked (GlcNAc...) asparagine glycosylation is present at asparagine 5. Residues 27 to 47 (LLFVIFLLLYLTILVANVTIM) traverse the membrane as a helical segment. At 48–55 (AVIRFSWT) the chain is on the cytoplasmic side. A helical membrane pass occupies residues 56–76 (LHTPMYGFLFILSFSESCYTF). The Extracellular portion of the chain corresponds to 77 to 100 (VIIPQLLVHLLSDTKTISFMACAT). A disulfide bridge connects residues cysteine 98 and cysteine 190. Residues 101 to 121 (QLFFFLGFACTNCLLIAVMGY) traverse the membrane as a helical segment. At 122-140 (DRYVAICHPLRYTLIINKR) the chain is on the cytoplasmic side. The helical transmembrane segment at 141 to 161 (LGLELISLSGATGFFIALVAT) threads the bilayer. Over 162–198 (NLICDMRFCGPNRVNHYFCDMAPVIKLACTDTHVKEL) the chain is Extracellular. Residues 199–218 (ALFSLSILVIMVPFLLILIS) traverse the membrane as a helical segment. Over 219 to 237 (YGFIVNTILKIPSAEGKKA) the chain is Cytoplasmic. Residues 238–258 (FVTCASHLTVVFVHYGCASII) form a helical membrane-spanning segment. The Extracellular portion of the chain corresponds to 259 to 271 (YLRPKSKSASDKD). The helical transmembrane segment at 272–292 (QLVAVTYTVVTPLLNPLVYSL) threads the bilayer. Residues 293–314 (RNKEVKTALKRVLGMPVATKMS) lie on the Cytoplasmic side of the membrane.

This sequence belongs to the G-protein coupled receptor 1 family.

The protein resides in the cell membrane. In terms of biological role, odorant receptor. This is Olfactory receptor 10T2 (OR10T2) from Homo sapiens (Human).